The sequence spans 151 residues: Potassium/proton antiporter CemA (151 aa).

The next 2 helical transmembrane spans lie at 7 to 27 (LPSL…SSSF) and 107 to 127 (ILHF…FFLG).

This sequence belongs to the CemA family.

It localises to the plastid. It is found in the chloroplast inner membrane. The catalysed reaction is K(+)(in) + H(+)(out) = K(+)(out) + H(+)(in). In terms of biological role, contributes to K(+)/H(+) antiport activity by supporting proton efflux to control proton extrusion and homeostasis in chloroplasts in a light-dependent manner to modulate photosynthesis. Prevents excessive induction of non-photochemical quenching (NPQ) under continuous-light conditions. Indirectly promotes efficient inorganic carbon uptake into chloroplasts. The protein is Potassium/proton antiporter CemA of Aegilops crassa (Persian goatgrass).